The primary structure comprises 460 residues: Argininosuccinate lyase (460 aa).

It belongs to the lyase 1 family. Argininosuccinate lyase subfamily.

It is found in the cytoplasm. The catalysed reaction is 2-(N(omega)-L-arginino)succinate = fumarate + L-arginine. Its pathway is amino-acid biosynthesis; L-arginine biosynthesis; L-arginine from L-ornithine and carbamoyl phosphate: step 3/3. The chain is Argininosuccinate lyase from Limosilactobacillus fermentum (strain NBRC 3956 / LMG 18251) (Lactobacillus fermentum).